A 189-amino-acid polypeptide reads, in one-letter code: Probable thymidylate kinase 1 (189 aa).

9–16 (GIDGSGKT) contacts ATP.

The protein belongs to the thymidylate kinase family.

The catalysed reaction is dTMP + ATP = dTDP + ADP. This chain is Probable thymidylate kinase 1 (tmk1), found in Saccharolobus solfataricus (strain ATCC 35092 / DSM 1617 / JCM 11322 / P2) (Sulfolobus solfataricus).